Here is a 250-residue protein sequence, read N- to C-terminus: NAD-dependent protein deacylase 1 (250 aa).

The region spanning 1–250 (MRAVVELLAG…PELLRRAFPG (250 aa)) is the Deacetylase sirtuin-type domain. 19–39 (GAGVSAESGIPTFRDALGGLW) provides a ligand contact to NAD(+). Substrate is bound by residues Tyr64 and Arg67. Position 98–101 (98–101 (QNVD)) interacts with NAD(+). His116 serves as the catalytic Proton acceptor. The Zn(2+) site is built by Cys124, Cys127, Cys152, and Cys155. NAD(+) is bound by residues 192–194 (GTS), 218–220 (NPQ), and Ala236.

Belongs to the sirtuin family. Class III subfamily. It depends on Zn(2+) as a cofactor.

The protein localises to the cytoplasm. The enzyme catalyses N(6)-acetyl-L-lysyl-[protein] + NAD(+) + H2O = 2''-O-acetyl-ADP-D-ribose + nicotinamide + L-lysyl-[protein]. The catalysed reaction is N(6)-succinyl-L-lysyl-[protein] + NAD(+) + H2O = 2''-O-succinyl-ADP-D-ribose + nicotinamide + L-lysyl-[protein]. Its function is as follows. NAD-dependent lysine deacetylase and desuccinylase that specifically removes acetyl and succinyl groups on target proteins. Modulates the activities of several proteins which are inactive in their acylated form. This Pseudomonas aeruginosa (strain ATCC 15692 / DSM 22644 / CIP 104116 / JCM 14847 / LMG 12228 / 1C / PRS 101 / PAO1) protein is NAD-dependent protein deacylase 1.